The following is a 424-amino-acid chain: E3 ubiquitin-protein ligase RNF26 (424 aa).

A run of 5 helical transmembrane segments spans residues 24-44, 60-80, 157-177, 183-203, and 224-244; these read LNFL…AFIY, GFLL…FGGL, ISTQ…TGPL, VVAA…ILLW, and VVFH…ILIV. Residues 371 to 413 form an RING-type zinc finger; it reads CVICQDQSKTVLLLPCRHLCLCQACTEILMRHPVYHRNCPLCR.

As to quaternary structure, interacts with INCA1. Interacts with TMEM43, ENDOD1, TMEM33 and TMED1 to form a complex capable of modulating innate immune signaling through the cGAS-STING pathway. Interacts with UBE2J1; this interaction is important for SQSTM1 ubiquitination.

Its subcellular location is the endoplasmic reticulum membrane. The catalysed reaction is S-ubiquitinyl-[E2 ubiquitin-conjugating enzyme]-L-cysteine + [acceptor protein]-L-lysine = [E2 ubiquitin-conjugating enzyme]-L-cysteine + N(6)-ubiquitinyl-[acceptor protein]-L-lysine.. The protein operates within protein modification; protein ubiquitination. Functionally, E3 ubiquitin-protein ligase that plays a key role in endosome organization by retaining vesicles in the perinuclear cloud. Acts as a platform for perinuclear positioning of the endosomal system by mediating ubiquitination of SQSTM1 through interaction with the ubiquitin conjugating enzyme UBE2J1. Ubiquitinated SQSTM1 attracts specific vesicle-associated adapters, forming a molecular bridge that restrains cognate vesicles in the perinuclear region and organizes the endosomal pathway for efficient cargo transport. Also acts as a regulator of type I interferon production in response to viral infection by mediating the formation of 'Lys-11'-linked polyubiquitin chains on TMEM173/STING, leading to stabilize TMEM173/STING. Also required to limit type I interferon response by promoting autophagic degradation of IRF3. The chain is E3 ubiquitin-protein ligase RNF26 from Mus musculus (Mouse).